The following is a 322-amino-acid chain: Sideroflexin-1 (322 aa).

N-acetylserine is present on Ser-2. Residues 2–102 (SGEVPPNINI…MSAQVPMNMT (101 aa)) are Mitochondrial matrix-facing. The helical transmembrane segment at 103 to 120 (ITGCMMTFYRTTPAVLFW) threads the bilayer. Over 121–146 (QWINQSFNAVVNYTNRSGDAPLTVNE) the chain is Mitochondrial intermembrane. The helical transmembrane segment at 147 to 167 (LGTAYVSATTGAVATALGLNA) threads the bilayer. Over 168–174 (LTKRVSP) the chain is Mitochondrial matrix. A helical membrane pass occupies residues 175–195 (LIGRFVPFAAVAAANCINIPL). Residues 196–228 (MRQRELKVGIPVTDENGTRLGESTNAAKQAITQ) lie on the Mitochondrial intermembrane side of the membrane. A helical transmembrane segment spans residues 229–249 (VVISRILMAAPGMAIPPFIMN). The Mitochondrial matrix segment spans residues 250–266 (TLEKKAFLKRFPWMSAP). A helical transmembrane segment spans residues 267-287 (IQVTLVGFCLVFATPLCCALF). Residues 288 to 322 (PQKSSMSVTSLEDELQASIQRTHPEIRRVYFNKGL) lie on the Mitochondrial intermembrane side of the membrane.

It belongs to the sideroflexin family. In terms of tissue distribution, widely expressed, with highest expression in kidney and liver.

It localises to the mitochondrion inner membrane. The catalysed reaction is L-serine(in) = L-serine(out). It catalyses the reaction L-alanine(in) = L-alanine(out). It carries out the reaction L-cysteine(in) = L-cysteine(out). Amino acid transporter importing serine, an essential substrate of the mitochondrial branch of the one-carbon pathway, into mitochondria. Mitochondrial serine is then converted to glycine and formate, which exits to the cytosol where it is used to generate the charged folates that serve as one-carbon donors. May also transport other amino acids including alanine and cysteine. The sequence is that of Sideroflexin-1 from Mus musculus (Mouse).